The primary structure comprises 219 residues: KP6 killer toxin (219 aa).

The first 19 residues, 1-19 (MLIFSVLMYLGLLLAGASA), serve as a signal peptide directing secretion. Positions 20 to 27 (LPNGLSPR) are excised as a propeptide. 4 disulfides stabilise this stretch: Cys-32–Cys-39, Cys-43–Cys-101, Cys-45–Cys-92, and Cys-62–Cys-78. Residue Asn-98 is glycosylated (N-linked (GlcNAc...) asparagine; by host). The propeptide occupies 106-138 (KRTIQDSATDTVDLGAELHRDDPPPTASDIGKR). The tract at residues 120-142 (GAELHRDDPPPTASDIGKRGKRP) is disordered.

In terms of assembly, heterodimer of two small polypeptides that are not covalently linked.

It is found in the secreted. This protein is lethal to sensitive cells of the same or related species. The KP6 alpha subunit is known to recognize some cellular receptors before interaction of the complex with KP6 beta, precipitating cell death. The protein is KP6 killer toxin of Ustilago maydis P6 virus (UmV6).